We begin with the raw amino-acid sequence, 446 residues long: C4-dicarboxylate transport protein 2 (446 aa).

The next 10 helical transmembrane spans lie at 7 to 26 (PLFG…GIWA), 46 to 64 (MLIA…CGAG), 77 to 99 (VIYF…YAFG), 152 to 171 (ILQV…LLGE), 192 to 211 (AVVI…FTVG), 221 to 243 (LGFL…LGGI), 291 to 313 (VVGL…YLTL), 318 to 340 (IAQA…VALI), 353 to 375 (IVIL…VLVL), and 381 to 403 (IGIA…IAAW).

It belongs to the dicarboxylate/amino acid:cation symporter (DAACS) (TC 2.A.23) family.

It is found in the cell inner membrane. Responsible for the transport of dicarboxylates such as succinate, fumarate, and malate from the periplasm across the membrane. The polypeptide is C4-dicarboxylate transport protein 2 (dctA2) (Ralstonia nicotianae (strain ATCC BAA-1114 / GMI1000) (Ralstonia solanacearum)).